We begin with the raw amino-acid sequence, 408 residues long: Na(+)/H(+) antiporter NhaA (408 aa).

12 consecutive transmembrane segments (helical) span residues 42 to 62, 69 to 89, 110 to 130, 140 to 160, 169 to 189, 192 to 212, 215 to 235, 238 to 258, 277 to 297, 312 to 332, 346 to 366, and 380 to 400; these read LMFVAALALLLANSPFAPVYF, VLGLTVLHWINDALMAVFFLL, ALPGIAALGGMVVPAVIFIAV, GWAIPSATDIAFALGVLSLLG, IFLTALAILDDLGAVLIIALF, AELTPLMLILAAATLLGLAAL, FGVKPLAPYLVLGVVLWFFVL, GIHATLAGVALALAIPLQAST, VAFLIVPVFGFANAGVSFAGL, LGLFFGKQVGVFGFAWLAIWL, LYGVAVLCGIGFTMSLFIGLL, and IGVLLGSTLAGLIGWLILRVT.

It belongs to the NhaA Na(+)/H(+) (TC 2.A.33) antiporter family.

It localises to the cell inner membrane. It catalyses the reaction Na(+)(in) + 2 H(+)(out) = Na(+)(out) + 2 H(+)(in). Na(+)/H(+) antiporter that extrudes sodium in exchange for external protons. The protein is Na(+)/H(+) antiporter NhaA of Nitrobacter hamburgensis (strain DSM 10229 / NCIMB 13809 / X14).